We begin with the raw amino-acid sequence, 86 residues long: Beta-toxin CsEI (86 aa).

The first 19 residues, 1–19 (MNSLLMITACLVLIGTVWA), serve as a signal peptide directing secretion. Positions 20–84 (KDGYLVEKTG…TWPLPNKTCG (65 aa)) constitute an LCN-type CS-alpha/beta domain. Disulfide bonds link cysteine 30–cysteine 83, cysteine 34–cysteine 59, cysteine 43–cysteine 64, and cysteine 47–cysteine 66. Position 83 is a cysteine amide (cysteine 83).

It belongs to the long (4 C-C) scorpion toxin superfamily. Sodium channel inhibitor family. Beta subfamily. Expressed by the venom gland.

It localises to the secreted. Its function is as follows. Beta toxins bind voltage-independently at site-4 of sodium channels (Nav) and shift the voltage of activation toward more negative potentials thereby affecting sodium channel activation and promoting spontaneous and repetitive firing. Affects channels from chicken and frog. This chain is Beta-toxin CsEI, found in Centruroides sculpturatus (Arizona bark scorpion).